The sequence spans 198 residues: Protoplast secreted protein 2 (198 aa).

An N-terminal signal peptide occupies residues 1 to 21; the sequence is MPRVAIIIYTLYGHVAATAEA. The region spanning 22–191 is the Flavodoxin-like domain; it reads EKKGIEAAGG…QVHEIQGKTF (170 aa).

Belongs to the WrbA family.

The protein localises to the secreted. This is Protoplast secreted protein 2 (PST2) from Saccharomyces cerevisiae (strain ATCC 204508 / S288c) (Baker's yeast).